The sequence spans 101 residues: Large ribosomal subunit protein uL23 (101 aa).

This sequence belongs to the universal ribosomal protein uL23 family. Part of the 50S ribosomal subunit. Contacts protein L29, and trigger factor when it is bound to the ribosome.

Functionally, one of the early assembly proteins it binds 23S rRNA. One of the proteins that surrounds the polypeptide exit tunnel on the outside of the ribosome. Forms the main docking site for trigger factor binding to the ribosome. The protein is Large ribosomal subunit protein uL23 of Corynebacterium glutamicum (strain R).